Reading from the N-terminus, the 319-residue chain is NAP1-binding protein (319 aa).

The segment covering 34–43 (SALRSRRKQM) has biased composition (basic residues). Positions 34–74 (SALRSRRKQMRPTGKSVLKRPRKVTDRKTEEKIRTNRRKTP) are disordered. Residues 56–67 (KVTDRKTEEKIR) show a composition bias toward basic and acidic residues. Residues Ser251 and Ser260 each carry the phosphoserine modification. The tract at residues 278 to 319 (EMQPLQENISPACPTPPYRSRETEKEDETLSPISVDFSSYLS) is disordered.

In terms of assembly, interacts with NDC1 and MPS2.

The chain is NAP1-binding protein (NBP1) from Saccharomyces cerevisiae (strain ATCC 204508 / S288c) (Baker's yeast).